Consider the following 274-residue polypeptide: Hydroxyethylthiazole kinase (274 aa).

M49 contacts substrate. Positions 125 and 173 each coordinate ATP. G200 contacts substrate.

The protein belongs to the Thz kinase family. Requires Mg(2+) as cofactor.

The catalysed reaction is 5-(2-hydroxyethyl)-4-methylthiazole + ATP = 4-methyl-5-(2-phosphooxyethyl)-thiazole + ADP + H(+). The protein operates within cofactor biosynthesis; thiamine diphosphate biosynthesis; 4-methyl-5-(2-phosphoethyl)-thiazole from 5-(2-hydroxyethyl)-4-methylthiazole: step 1/1. Its function is as follows. Catalyzes the phosphorylation of the hydroxyl group of 4-methyl-5-beta-hydroxyethylthiazole (THZ). The polypeptide is Hydroxyethylthiazole kinase (Desulfosudis oleivorans (strain DSM 6200 / JCM 39069 / Hxd3) (Desulfococcus oleovorans)).